The primary structure comprises 127 residues: Large ribosomal subunit protein bL12 (127 aa).

The interval 98 to 127 (PKPVKNGVSKEEAEEAKKQLVESGAEVEIK) is disordered. Over residues 105–117 (VSKEEAEEAKKQL) the composition is skewed to basic and acidic residues.

This sequence belongs to the bacterial ribosomal protein bL12 family. Homodimer. Part of the ribosomal stalk of the 50S ribosomal subunit. Forms a multimeric L10(L12)X complex, where L10 forms an elongated spine to which 2 to 4 L12 dimers bind in a sequential fashion. Binds GTP-bound translation factors.

In terms of biological role, forms part of the ribosomal stalk which helps the ribosome interact with GTP-bound translation factors. Is thus essential for accurate translation. In Geobacter sulfurreducens (strain ATCC 51573 / DSM 12127 / PCA), this protein is Large ribosomal subunit protein bL12.